Here is a 291-residue protein sequence, read N- to C-terminus: Elongation factor Ts (291 aa).

The interval 80 to 83 is involved in Mg(2+) ion dislocation from EF-Tu; the sequence is TDFV.

This sequence belongs to the EF-Ts family.

Its subcellular location is the cytoplasm. In terms of biological role, associates with the EF-Tu.GDP complex and induces the exchange of GDP to GTP. It remains bound to the aminoacyl-tRNA.EF-Tu.GTP complex up to the GTP hydrolysis stage on the ribosome. The protein is Elongation factor Ts of Acinetobacter baumannii (strain AB307-0294).